The sequence spans 504 residues: UDP-N-acetylmuramoylalanine--D-glutamate ligase (504 aa).

129–135 (GTNGKTT) is an ATP binding site.

Belongs to the MurCDEF family.

Its subcellular location is the cytoplasm. It carries out the reaction UDP-N-acetyl-alpha-D-muramoyl-L-alanine + D-glutamate + ATP = UDP-N-acetyl-alpha-D-muramoyl-L-alanyl-D-glutamate + ADP + phosphate + H(+). The protein operates within cell wall biogenesis; peptidoglycan biosynthesis. In terms of biological role, cell wall formation. Catalyzes the addition of glutamate to the nucleotide precursor UDP-N-acetylmuramoyl-L-alanine (UMA). The protein is UDP-N-acetylmuramoylalanine--D-glutamate ligase of Burkholderia thailandensis (strain ATCC 700388 / DSM 13276 / CCUG 48851 / CIP 106301 / E264).